Consider the following 221-residue polypeptide: MELTLHEARVIGCLLEKEITTPEQYPLSLNALTLACNQKTSREPVLDLSEAQVQDALDSLTKKRLISEQSGFGSRVVKYKHRFCNTEFSELQLSPAAVAIVCLLLLRGPQTPGELRTRSNRLHEFKDVIEVEDCIKQLISRTKPILKQLPREPGRRESRYVELFSETSANVVTTSDHTDKLHTAPVAALVEHGALVARVTELEQQVATLTQKFDELIASLT.

It belongs to the UPF0502 family.

This chain is UPF0502 protein Sputw3181_2381, found in Shewanella sp. (strain W3-18-1).